The primary structure comprises 93 residues: UPF0457 protein GTNG_2792 (93 aa).

Belongs to the UPF0457 family.

This is UPF0457 protein GTNG_2792 from Geobacillus thermodenitrificans (strain NG80-2).